Reading from the N-terminus, the 635-residue chain is MIRVICDNETFELPTGSTAADFASKIKNSHYFAGVVINDQIKDLSTTLSEGDVLKFVTFTDPEGREIFLHTSAHMLAQAVLRLWPQAIPTIGPVIDLGFYYDFANLSISEDDFPAIENMVEQIAKERFEISKKTFNDKQEALQEFASNPFKVELIQEFPEDENITCYSQGEFMDLCRGPHLPSTAPVKAFKLLRTSAAYWRGDPSRESLVRIYGVSFPTTKELKEHLHQLEEAKKRDHRVLGTKLDLFSQQECSAGMPFFHPRGMIIWDALIGYWKRLHQLAGYKEILTPQLVNRSLWEVSGHWSNYKENMYTLKIDEEDYAIKPMNCPGCMLYYKTRLHSYKEFPLRIAEIGHVHRYEISGALSGLMRVRAFHQDDAHVFLTPEQVEEETLNILNLVSELYSTFGLEYHLELSTRPEKATIGSDELWDLATAALERALINSNTPFVINPGDGAFYGPKIDIHVKDAIQRTWQCGTIQLDMFLPERFELEYTNAQGEKSTPIMLHRALFGSIERFLGILIEHFKGRFPLWLSPEHVRLITVADRHQPRAQELATAWQQLGFVVTVDDSNESVSKKIRNAQNMQVNYMVTLGDREIEENTLAVRTRDNRVLNNMTIDTFINTILEEKNSLSLTPLL.

The TGS domain maps to 1–58 (MIRVICDNETFELPTGSTAADFASKIKNSHYFAGVVINDQIKDLSTTLSEGDVLKFVT). Positions 237–528 (DHRVLGTKLD…LIEHFKGRFP (292 aa)) are catalytic. Residues Cys-328, His-379, and His-505 each coordinate Zn(2+).

It belongs to the class-II aminoacyl-tRNA synthetase family. In terms of assembly, homodimer. Zn(2+) is required as a cofactor.

Its subcellular location is the cytoplasm. The catalysed reaction is tRNA(Thr) + L-threonine + ATP = L-threonyl-tRNA(Thr) + AMP + diphosphate + H(+). Catalyzes the attachment of threonine to tRNA(Thr) in a two-step reaction: L-threonine is first activated by ATP to form Thr-AMP and then transferred to the acceptor end of tRNA(Thr). Also edits incorrectly charged L-seryl-tRNA(Thr). The sequence is that of Threonine--tRNA ligase from Chlamydia felis (strain Fe/C-56) (Chlamydophila felis).